Consider the following 2495-residue polypeptide: Zinc finger protein 462 (2495 aa).

3 consecutive C2H2-type zinc fingers follow at residues 4–27 (LQCD…QDVH), 108–131 (FQCK…RKVH), and 162–185 (FSCQ…KMYH). Residue lysine 20 forms a Glycyl lysine isopeptide (Lys-Gly) (interchain with G-Cter in SUMO1); alternate linkage. A Glycyl lysine isopeptide (Lys-Gly) (interchain with G-Cter in SUMO2); alternate cross-link involves residue lysine 20. The interaction with PBX1 stretch occupies residues 215-241 (PCKELPAEVVERSILESMVKPLTKSRG). Residues lysine 234 and lysine 271 each participate in a glycyl lysine isopeptide (Lys-Gly) (interchain with G-Cter in SUMO2) cross-link. Disordered stretches follow at residues 278–301 (QQEG…NSTY), 329–357 (RPNS…NSGL), and 370–395 (DMTN…DLNE). Low complexity predominate over residues 332-343 (SSSTSKFSSSMS). Residues lysine 337, lysine 348, and lysine 350 each participate in a glycyl lysine isopeptide (Lys-Gly) (interchain with G-Cter in SUMO2) cross-link. Residues serine 351 and serine 355 each carry the phosphoserine modification. A compositionally biased stretch (polar residues) spans 370-387 (DMTNSSADLDTNSMLNDS). Lysine 429 participates in a covalent cross-link: Glycyl lysine isopeptide (Lys-Gly) (interchain with G-Cter in SUMO2). 2 C2H2-type zinc fingers span residues 440-463 (FQCP…ENIH) and 471-493 (YKCD…KQCH). Lysine 485 participates in a covalent cross-link: Glycyl lysine isopeptide (Lys-Gly) (interchain with G-Cter in SUMO2). The disordered stretch occupies residues 492-590 (CHTGTSDWDT…PQPPTQAPPL (99 aa)). The span at 493 to 502 (HTGTSDWDTV) shows a compositional bias: polar residues. Residues 503–515 (NSQSESLSSSLNE) show a composition bias toward low complexity. Residues 542–590 (PPQPPPPLPPPPPPPSQPLPQPPPPPLQSPHQVPPPTQQPQPPTQAPPL) are compositionally biased toward pro residues. The C2H2-type 6 zinc finger occupies 593-616 (YKCTMCSYSTMTLKGLRVHQQHKH). Glycyl lysine isopeptide (Lys-Gly) (interchain with G-Cter in SUMO2) cross-links involve residues lysine 624, lysine 650, and lysine 661. Positions 629–654 (PSSLPLENETDSHPSSSNTVKKSQTS) are disordered. Polar residues predominate over residues 641 to 654 (HPSSSNTVKKSQTS). Serine 681 bears the Phosphoserine mark. Lysine 699 participates in a covalent cross-link: Glycyl lysine isopeptide (Lys-Gly) (interchain with G-Cter in SUMO2). C2H2-type zinc fingers lie at residues 835-858 (YYCK…QRMH), 878-900 (YRCL…YGEH), and 917-940 (YRCR…QRMH). Residue lysine 978 forms a Glycyl lysine isopeptide (Lys-Gly) (interchain with G-Cter in SUMO2) linkage. The segment at 980–999 (MATSTPVARGGGLPATFNKN) is disordered. The C2H2-type 10 zinc-finger motif lies at 1023–1046 (YDCDVCSFASPNMHSVLVHYQKKH). Serine 1083 carries the phosphoserine modification. Residue lysine 1128 forms a Glycyl lysine isopeptide (Lys-Gly) (interchain with G-Cter in SUMO2) linkage. Phosphoserine is present on serine 1159. Residues lysine 1196, lysine 1204, lysine 1210, and lysine 1232 each participate in a glycyl lysine isopeptide (Lys-Gly) (interchain with G-Cter in SUMO2) cross-link. 2 consecutive C2H2-type zinc fingers follow at residues 1254–1277 (LKCR…KKDH) and 1459–1482 (YQCT…GKKH). Residue lysine 1488 forms a Glycyl lysine isopeptide (Lys-Gly) (interchain with G-Cter in SUMO2) linkage. The segment at 1504 to 1527 (YKCRHCPYINTRIHGVLTHYQKRH) adopts a C2H2-type 13 zinc-finger fold. Residues lysine 1560 and lysine 1580 each participate in a glycyl lysine isopeptide (Lys-Gly) (interchain with G-Cter in SUMO2) cross-link. 3 C2H2-type zinc fingers span residues 1566–1589 (YRCK…EKYH), 1649–1672 (FRCQ…RIKH), and 1686–1709 (FKCA…QKRH). Glycyl lysine isopeptide (Lys-Gly) (interchain with G-Cter in SUMO2) cross-links involve residues lysine 1687 and lysine 1769. The C2H2-type 17 zinc finger occupies 1881 to 1903 (FQCKHCDSKLQSIAELTSHLNIH). Lysine 1935 is covalently cross-linked (Glycyl lysine isopeptide (Lys-Gly) (interchain with G-Cter in SUMO2)). The C2H2-type 18; degenerate zinc finger occupies 1957–1981 (YKCKFCVEVHPTLRAICNHLRKHVQ). Residue lysine 1993 is modified to N6-methyllysine. C2H2-type zinc fingers lie at residues 2014-2037 (YSCQ…QTHH), 2043-2066 (FRCK…LKAH), and 2072-2095 (YKCS…LKVH). Lysine 2093 is covalently cross-linked (Glycyl lysine isopeptide (Lys-Gly) (interchain with G-Cter in SUMO2)). Polar residues-rich tracts occupy residues 2112–2121 (SHAHPSSQKA) and 2132–2149 (DSSY…NHYQ). The segment at 2112–2172 (SHAHPSSQKA…VPPSGTAAGT (61 aa)) is disordered. Serine 2161 and serine 2166 each carry phosphoserine. C2H2-type zinc fingers lie at residues 2180 to 2203 (LHCE…RDKH), 2209 to 2232 (FKCK…EAGH), and 2243 to 2265 (LRCP…IVLH). Lysine 2282 participates in a covalent cross-link: Glycyl lysine isopeptide (Lys-Gly) (interchain with G-Cter in SUMO2). C2H2-type zinc fingers lie at residues 2289–2311 (FRCD…IEKH) and 2317–2340 (YKCQ…RDEH). The tract at residues 2361–2387 (KEKIESSSSEDEDKDDEMSSKAEDREL) is disordered. Residues 2377 to 2387 (EMSSKAEDREL) are compositionally biased toward basic and acidic residues. The C2H2-type 27 zinc finger occupies 2403 to 2425 (FPCEFCGRAFSQGSEWERHVLRH). Lysine 2493 participates in a covalent cross-link: Glycyl lysine isopeptide (Lys-Gly) (interchain with G-Cter in SUMO2).

In terms of assembly, interacts with PBX1 isoform PBX1b; this interaction prevents PBX1-HOXA9 heterodimer from forming and binding to DNA. In terms of tissue distribution, expressed in the cerebral cortex (at protein level). Expressed in embryonic stem cells (at protein level). Expressed in heart, liver, kidney, muscle, and female and male genital tracts (at protein level).

The protein resides in the nucleus. In terms of biological role, zinc finger nuclear factor involved in transcription by regulating chromatin structure and organization. Involved in the pluripotency and differentiation of embryonic stem cells by regulating SOX2, POU5F1/OCT4, and NANOG. By binding PBX1, prevents the heterodimerization of PBX1 and HOXA9 and their binding to DNA. Regulates neuronal development and neural cell differentiation. The protein is Zinc finger protein 462 of Mus musculus (Mouse).